The chain runs to 190 residues: Isopentenyl-diphosphate Delta-isomerase (190 aa).

Residues H27 and H34 each contribute to the Mn(2+) site. One can recognise a Nudix hydrolase domain in the interval 32-171 (PLHFAFSSYI…PFVFSPWMVD (140 aa)). C69 is an active-site residue. C69 provides a ligand contact to Mg(2+). H71 is a binding site for Mn(2+). E89 provides a ligand contact to Mg(2+). Positions 119 and 121 each coordinate Mn(2+). Residue E121 is part of the active site.

The protein belongs to the IPP isomerase type 1 family. Mg(2+) is required as a cofactor. Requires Mn(2+) as cofactor.

The protein resides in the cytoplasm. The catalysed reaction is isopentenyl diphosphate = dimethylallyl diphosphate. It functions in the pathway isoprenoid biosynthesis; dimethylallyl diphosphate biosynthesis; dimethylallyl diphosphate from isopentenyl diphosphate: step 1/1. Its function is as follows. Catalyzes the 1,3-allylic rearrangement of the homoallylic substrate isopentenyl (IPP) to its highly electrophilic allylic isomer, dimethylallyl diphosphate (DMAPP). The chain is Isopentenyl-diphosphate Delta-isomerase from Corynebacterium efficiens (strain DSM 44549 / YS-314 / AJ 12310 / JCM 11189 / NBRC 100395).